The following is a 133-amino-acid chain: Large ribosomal subunit protein bL17 (133 aa).

The protein belongs to the bacterial ribosomal protein bL17 family. In terms of assembly, part of the 50S ribosomal subunit. Contacts protein L32.

The polypeptide is Large ribosomal subunit protein bL17 (Nitratidesulfovibrio vulgaris (strain ATCC 29579 / DSM 644 / CCUG 34227 / NCIMB 8303 / VKM B-1760 / Hildenborough) (Desulfovibrio vulgaris)).